We begin with the raw amino-acid sequence, 193 residues long: dCTP deaminase (193 aa).

DCTP-binding positions include 110-115 (RSSLAR), Asp128, 136-138 (VLE), Tyr171, Lys178, and Gln182. Glu138 (proton donor/acceptor) is an active-site residue.

The protein belongs to the dCTP deaminase family. As to quaternary structure, homotrimer.

It carries out the reaction dCTP + H2O + H(+) = dUTP + NH4(+). Its pathway is pyrimidine metabolism; dUMP biosynthesis; dUMP from dCTP (dUTP route): step 1/2. Functionally, catalyzes the deamination of dCTP to dUTP. The chain is dCTP deaminase from Buchnera aphidicola subsp. Schizaphis graminum (strain Sg).